The chain runs to 263 residues: 4-hydroxy-2-oxo-heptane-1,7-dioate aldolase (263 aa).

His-45 serves as the catalytic Proton acceptor. Gln-147 lines the substrate pocket. Glu-149 is an a divalent metal cation binding site. Ala-174 and Asp-175 together coordinate substrate. Asp-175 serves as a coordination point for a divalent metal cation.

It belongs to the HpcH/HpaI aldolase family. As to quaternary structure, homohexamer; trimer of dimers. It depends on a divalent metal cation as a cofactor.

The catalysed reaction is 4-hydroxy-2-oxoheptanedioate = succinate semialdehyde + pyruvate. It participates in aromatic compound metabolism; 4-hydroxyphenylacetate degradation; pyruvate and succinate semialdehyde from 4-hydroxyphenylacetate: step 7/7. Functionally, catalyzes the reversible retro-aldol cleavage of 4-hydroxy-2-ketoheptane-1,7-dioate (HKHD) to pyruvate and succinic semialdehyde. In Salmonella typhimurium (strain LT2 / SGSC1412 / ATCC 700720), this protein is 4-hydroxy-2-oxo-heptane-1,7-dioate aldolase.